The chain runs to 330 residues: Phosphate acyltransferase (330 aa).

Belongs to the PlsX family. In terms of assembly, homodimer. Probably interacts with PlsY.

It localises to the cytoplasm. It carries out the reaction a fatty acyl-[ACP] + phosphate = an acyl phosphate + holo-[ACP]. It functions in the pathway lipid metabolism; phospholipid metabolism. Functionally, catalyzes the reversible formation of acyl-phosphate (acyl-PO(4)) from acyl-[acyl-carrier-protein] (acyl-ACP). This enzyme utilizes acyl-ACP as fatty acyl donor, but not acyl-CoA. The chain is Phosphate acyltransferase from Carboxydothermus hydrogenoformans (strain ATCC BAA-161 / DSM 6008 / Z-2901).